The chain runs to 579 residues: UPF0324 membrane protein DVU_0943 (579 aa).

The next 10 membrane-spanning stretches (helical) occupy residues 26-45 (YWAI…LFLA), 193-215 (AFNI…AIGM), 225-243 (FLVG…QMMG), 250-272 (YWGI…TVGT), 305-327 (IGIP…TFIF), 369-391 (LTLS…PAFI), 430-452 (AATI…AVYW), 473-495 (FPKF…GSLG), 515-533 (LRGW…ATNF), and 546-568 (LILY…YIMF).

The protein belongs to the UPF0324 family.

The protein resides in the cell membrane. This Nitratidesulfovibrio vulgaris (strain ATCC 29579 / DSM 644 / CCUG 34227 / NCIMB 8303 / VKM B-1760 / Hildenborough) (Desulfovibrio vulgaris) protein is UPF0324 membrane protein DVU_0943.